The chain runs to 278 residues: S-formylglutathione hydrolase YeiG (278 aa).

Residues Ser-145, Asp-223, and His-256 each act as charge relay system in the active site.

This sequence belongs to the esterase D family.

The enzyme catalyses S-formylglutathione + H2O = formate + glutathione + H(+). Its function is as follows. Serine hydrolase involved in the detoxification of formaldehyde. Hydrolyzes S-formylglutathione to glutathione and formate. This is S-formylglutathione hydrolase YeiG (yeiG) from Shigella boydii serotype 4 (strain Sb227).